A 128-amino-acid polypeptide reads, in one-letter code: Large ribosomal subunit protein bL12 (128 aa).

Belongs to the bacterial ribosomal protein bL12 family. Homodimer. Part of the ribosomal stalk of the 50S ribosomal subunit. Forms a multimeric L10(L12)X complex, where L10 forms an elongated spine to which 2 to 4 L12 dimers bind in a sequential fashion. Binds GTP-bound translation factors.

Functionally, forms part of the ribosomal stalk which helps the ribosome interact with GTP-bound translation factors. Is thus essential for accurate translation. This chain is Large ribosomal subunit protein bL12, found in Rubrobacter xylanophilus (strain DSM 9941 / JCM 11954 / NBRC 16129 / PRD-1).